The primary structure comprises 254 residues: Triosephosphate isomerase (254 aa).

Residue 12–14 participates in substrate binding; that stretch reads NWK. Residue His-99 is the Electrophile of the active site. The active-site Proton acceptor is the Glu-169. Residues Gly-175, Ser-214, and 235–236 contribute to the substrate site; that span reads GG.

Belongs to the triosephosphate isomerase family. In terms of assembly, homodimer.

The protein resides in the cytoplasm. The catalysed reaction is D-glyceraldehyde 3-phosphate = dihydroxyacetone phosphate. It functions in the pathway carbohydrate biosynthesis; gluconeogenesis. The protein operates within carbohydrate degradation; glycolysis; D-glyceraldehyde 3-phosphate from glycerone phosphate: step 1/1. Involved in the gluconeogenesis. Catalyzes stereospecifically the conversion of dihydroxyacetone phosphate (DHAP) to D-glyceraldehyde-3-phosphate (G3P). The chain is Triosephosphate isomerase from Bartonella quintana (strain Toulouse) (Rochalimaea quintana).